Reading from the N-terminus, the 252-residue chain is Maintenance of carboxysome distribution protein A (252 aa).

The ATP site is built by Gly11, Gly12, Gly14, Lys15, Thr16, Thr17, Gln41, Glu147, Lys151, Phe182, Arg183, Leu216, Glu217, and Ser218. Thr16 contributes to the Mg(2+) binding site.

The protein belongs to the ParA family. McdA subfamily. Self-associates (probably a homodimer), interacts with McdB probably via the C-terminus of both proteins. Shows no signs of filament formation. Homodimerizes in the presence of ATP, making extra nucleotide contacts than with ADP or AMP-PNP. Each subunit binds 1 ATP molecule; Glu-147, Lys-151 and Arg-183 cross the dimer interface to contact ATP in the other subunit, while Phe-182, Arg-183 and Phe-221 stack with the adenine base in their own subunit.

The protein resides in the cytoplasm. It localises to the nucleoid. It carries out the reaction ATP + H2O = ADP + phosphate + H(+). Its function is as follows. McdA and McdB together mediate carboxysome (Cb) spacing, size, ultrastructure and probably inheritance in the cell. Together they prevent Cb aggregation. McdA is an ATPase that forms dynamic gradients on the nucleoid in response to adapter protein McdB, which associates with carboxysomes. The interplay between McdA gradients on the nucleoid and McdB-bound carboxysomes result in the equal spacing of Cbs along the cell length. Binds nucleoid DNA in an ATP-dependent manner; neither ADP nor ATP-gamma-S support DNA binding. Upon ATP-binding dimerizes and binds nucleoid DNA; the (McdA-ATP)2 dimer transiently binds McdB-bound Cbs. McdA's ATPase activity is stimulated 2-fold by DNA and McdB; ATP hydrolysis causes McdA release from DNA. Overexpression leads to loss of McdA oscillation, diffuse nucleoid staining by McdA with formation of large carboxysome aggregates that are in regions depleted of McdA; McdA remains nucleoid-associated. Mutagenesis studies (characterized in vivo) suggest ATP binding, protein dimerization and a conformational change are necessary for nucleoid DNA-binding and binding to McdB-bound Cbs, which tethers Cbs to the nucleoid. Eventual McdB-stimulated ATP hydrolysis causes de-dimerization of McdA which no longer binds the nucleoid and releases McdB and Cbs. McdB-bound Cbs then move to a region of higher McdA concentration, distributing Cbs across the nucleoid. Functionally, incorrect positioning (aggregation) of carboxysomes results in reduced CO(2) fixation by encapsulated ribulose-1,5-bisphosphate carboxylase (RuBisCO, cbbL/cbbS), which leads to slower growth, cell elongation, asymmetric cell division and an increase in RuBisCO levels. The chain is Maintenance of carboxysome distribution protein A from Synechococcus elongatus (strain ATCC 33912 / PCC 7942 / FACHB-805) (Anacystis nidulans R2).